Reading from the N-terminus, the 584-residue chain is MAKQLSFSNESRDALEKGVNFVANAVKVTIGPKAKNVVIERKFGSPDVVRDGSTVAKEIEIENPISNLGAKLIEQVASKTKESAGDGTTTATILTQKMVQEGLKNIASGASPMELKKGMEVGLAFVLEKLSSKSISLSGSDIQKVATVSAGGDQEIGSIISKAMDIVTSDGVITVEESQSLDTELDITEGMSFDRGYSSPYFVTDQERQVCELENPKILITDQKISTLANLVPILEEIQKSGSPFLILAEDIEGEALTTLVLNKNSGVLNVASVRAPLFGERRKAALEDIAILTGAKLISEDKSMTLDQVSINDLGKAKKITITKDKTTIVAFEDTKDLVKARVEKLKREVEMTESEYDQDKINERIAKLAGGVALIKVGAATETEMKYKKLRIEDSLNATKAAIEEGVVSGGGQTLIEISDELLNLSQKSSDDLRTGINIVKEALLEPTKQIAKNAGFNGDVVVAEIKRLNKGFNANSGKYENLKESGILDPTKVIRLALQDSVSIAAMLLTTEVAIADIPEPEAAAPGGPGGDPMGGMGGMGGMGMPGMGGMGMPGMGGMGMPGMGGMGMPGMGGMGMPGMM.

ATP-binding positions include 29–32, 86–90, G413, and D492; these read TIGP and DGTTT. The segment at 523-542 is disordered; it reads EPEAAAPGGPGGDPMGGMGG. Over residues 530 to 542 the composition is skewed to gly residues; sequence GGPGGDPMGGMGG.

This sequence belongs to the chaperonin (HSP60) family. As to quaternary structure, forms a cylinder of 14 subunits composed of two heptameric rings stacked back-to-back. Interacts with the co-chaperonin GroES.

It is found in the cytoplasm. It carries out the reaction ATP + H2O + a folded polypeptide = ADP + phosphate + an unfolded polypeptide.. Its function is as follows. Together with its co-chaperonin GroES, plays an essential role in assisting protein folding. The GroEL-GroES system forms a nano-cage that allows encapsulation of the non-native substrate proteins and provides a physical environment optimized to promote and accelerate protein folding. The sequence is that of Chaperonin GroEL 1 from Prochlorococcus marinus (strain MIT 9312).